A 449-amino-acid chain; its full sequence is Tubulin beta-5 chain (449 aa).

The GTP site is built by Q11, E70, S139, G143, T144, G145, N205, and N227. E70 serves as a coordination point for Mg(2+). A disordered region spans residues 427-449 (QDATADEEGEYDVEEEEEGDYET). Residues 430-449 (TADEEGEYDVEEEEEGDYET) are compositionally biased toward acidic residues.

Belongs to the tubulin family. Dimer of alpha and beta chains. A typical microtubule is a hollow water-filled tube with an outer diameter of 25 nm and an inner diameter of 15 nM. Alpha-beta heterodimers associate head-to-tail to form protofilaments running lengthwise along the microtubule wall with the beta-tubulin subunit facing the microtubule plus end conferring a structural polarity. Microtubules usually have 13 protofilaments but different protofilament numbers can be found in some organisms and specialized cells. Mg(2+) serves as cofactor.

Its subcellular location is the cytoplasm. It is found in the cytoskeleton. Functionally, tubulin is the major constituent of microtubules, a cylinder consisting of laterally associated linear protofilaments composed of alpha- and beta-tubulin heterodimers. Microtubules grow by the addition of GTP-tubulin dimers to the microtubule end, where a stabilizing cap forms. Below the cap, tubulin dimers are in GDP-bound state, owing to GTPase activity of alpha-tubulin. This Arabidopsis thaliana (Mouse-ear cress) protein is Tubulin beta-5 chain (TUBB5).